Reading from the N-terminus, the 158-residue chain is Glutathione peroxidase homolog BsaA (158 aa).

Threonine 36 is a catalytic residue.

Belongs to the glutathione peroxidase family.

This Staphylococcus epidermidis (strain ATCC 35984 / DSM 28319 / BCRC 17069 / CCUG 31568 / BM 3577 / RP62A) protein is Glutathione peroxidase homolog BsaA (bsaA).